The sequence spans 500 residues: MTNIWLLSLIFVICILVAVFNHKNRRNYQRTPPSPPGCPIIGNLHQLGELPHQSLWKLSKKYGPVMLLKLGRVPTVIVSSSETAKQALKIHDLHCCSRPGFAGARELSYNYLDIAFSPYDDYWKEVRKLAVQELFSSKQVHSIQPIKDEEVKKLIDSISESAAQKTPINLNKTLLALTVSVVCRTAFSVNFEGTVLNSERFNNIVREALEMLGSFSASDFIPYVGRIIDLLTGLQGRRERSMRDLDAFYEQMFDLHKQKKEEGSEDFVDLLLRLEKEEAVLGNDKLTRNHIKAILMDVLLAGMDTSAITMTWAMAELAKNPRVMKKVQSEIRSQIKNKERISFDDTDKLEYLKMVIKETWRLHPTTPLLIPREAMSEFEINGYTIPVKTRLHVNVWAIGRDPDTWKDPEVFLPERFTDNNIDAKGQHFELLPFGGGRRMCPAVYMGTTMVEFGLANLLYHFDWKLPEGMKVDDIDMEEAPGLTVNKKNELILVPTKFLDP.

Residues 1-21 (MTNIWLLSLIFVICILVAVFN) traverse the membrane as a helical segment. Cysteine 440 contacts heme.

This sequence belongs to the cytochrome P450 family. Requires heme as cofactor.

It is found in the membrane. This chain is Cytochrome P450 71B34 (CYP71B34), found in Arabidopsis thaliana (Mouse-ear cress).